A 93-amino-acid polypeptide reads, in one-letter code: Small ribosomal subunit protein uS19 (93 aa).

This sequence belongs to the universal ribosomal protein uS19 family.

Protein S19 forms a complex with S13 that binds strongly to the 16S ribosomal RNA. The protein is Small ribosomal subunit protein uS19 of Saccharopolyspora erythraea (strain ATCC 11635 / DSM 40517 / JCM 4748 / NBRC 13426 / NCIMB 8594 / NRRL 2338).